The sequence spans 135 residues: Small ribosomal subunit protein bS16 (135 aa).

Positions 105 to 120 are enriched in basic and acidic residues; sequence DEKKKPVLKPKTEKAA. The segment at 105–135 is disordered; that stretch reads DEKKKPVLKPKTEKAAPEAAAPEAEATEEQA.

Belongs to the bacterial ribosomal protein bS16 family.

The chain is Small ribosomal subunit protein bS16 from Clavibacter sepedonicus (Clavibacter michiganensis subsp. sepedonicus).